We begin with the raw amino-acid sequence, 274 residues long: Thiamine kinase (274 aa).

This sequence belongs to the thiamine kinase family.

The enzyme catalyses thiamine + ATP = thiamine phosphate + ADP + H(+). The protein operates within cofactor biosynthesis; thiamine diphosphate biosynthesis; thiamine phosphate from thiamine: step 1/1. Catalyzes the ATP-dependent phosphorylation of thiamine to thiamine phosphate. Is involved in thiamine salvage. This is Thiamine kinase from Escherichia coli O17:K52:H18 (strain UMN026 / ExPEC).